Consider the following 257-residue polypeptide: Type III pantothenate kinase (257 aa).

6–13 (DVGNTNTV) contributes to the ATP binding site. Residues Tyr-102 and 109-112 (GADR) each bind substrate. The active-site Proton acceptor is Asp-111. Residue Asp-131 coordinates K(+). Thr-134 lines the ATP pocket. Thr-186 provides a ligand contact to substrate.

This sequence belongs to the type III pantothenate kinase family. As to quaternary structure, homodimer. NH4(+) is required as a cofactor. It depends on K(+) as a cofactor.

It is found in the cytoplasm. It catalyses the reaction (R)-pantothenate + ATP = (R)-4'-phosphopantothenate + ADP + H(+). It functions in the pathway cofactor biosynthesis; coenzyme A biosynthesis; CoA from (R)-pantothenate: step 1/5. Functionally, catalyzes the phosphorylation of pantothenate (Pan), the first step in CoA biosynthesis. The chain is Type III pantothenate kinase from Leptospira borgpetersenii serovar Hardjo-bovis (strain JB197).